We begin with the raw amino-acid sequence, 295 residues long: Pyridoxal 5'-phosphate synthase subunit PdxS (295 aa).

Residue aspartate 25 participates in D-ribose 5-phosphate binding. Residue lysine 82 is the Schiff-base intermediate with D-ribose 5-phosphate of the active site. Residue glycine 154 coordinates D-ribose 5-phosphate. Arginine 166 is a D-glyceraldehyde 3-phosphate binding site. Residues glycine 215 and 236–237 (GS) contribute to the D-ribose 5-phosphate site.

This sequence belongs to the PdxS/SNZ family. In terms of assembly, in the presence of PdxT, forms a dodecamer of heterodimers.

It catalyses the reaction aldehydo-D-ribose 5-phosphate + D-glyceraldehyde 3-phosphate + L-glutamine = pyridoxal 5'-phosphate + L-glutamate + phosphate + 3 H2O + H(+). Its pathway is cofactor biosynthesis; pyridoxal 5'-phosphate biosynthesis. Functionally, catalyzes the formation of pyridoxal 5'-phosphate from ribose 5-phosphate (RBP), glyceraldehyde 3-phosphate (G3P) and ammonia. The ammonia is provided by the PdxT subunit. Can also use ribulose 5-phosphate and dihydroxyacetone phosphate as substrates, resulting from enzyme-catalyzed isomerization of RBP and G3P, respectively. The polypeptide is Pyridoxal 5'-phosphate synthase subunit PdxS (Natranaerobius thermophilus (strain ATCC BAA-1301 / DSM 18059 / JW/NM-WN-LF)).